A 271-amino-acid chain; its full sequence is Formamidopyrimidine-DNA glycosylase (271 aa).

The Schiff-base intermediate with DNA role is filled by Pro2. Catalysis depends on Glu3, which acts as the Proton donor. Lys58 acts as the Proton donor; for beta-elimination activity in catalysis. 3 residues coordinate DNA: His92, Arg111, and Arg152. An FPG-type zinc finger spans residues 237–271 (FVYGRQQQPCKQCGSLLRQTTIRQRTTVWCGHCQG). The active-site Proton donor; for delta-elimination activity is the Arg261.

Belongs to the FPG family. As to quaternary structure, monomer. Zn(2+) serves as cofactor.

It carries out the reaction Hydrolysis of DNA containing ring-opened 7-methylguanine residues, releasing 2,6-diamino-4-hydroxy-5-(N-methyl)formamidopyrimidine.. The catalysed reaction is 2'-deoxyribonucleotide-(2'-deoxyribose 5'-phosphate)-2'-deoxyribonucleotide-DNA = a 3'-end 2'-deoxyribonucleotide-(2,3-dehydro-2,3-deoxyribose 5'-phosphate)-DNA + a 5'-end 5'-phospho-2'-deoxyribonucleoside-DNA + H(+). Involved in base excision repair of DNA damaged by oxidation or by mutagenic agents. Acts as a DNA glycosylase that recognizes and removes damaged bases. Has a preference for oxidized purines, such as 7,8-dihydro-8-oxoguanine (8-oxoG). Has AP (apurinic/apyrimidinic) lyase activity and introduces nicks in the DNA strand. Cleaves the DNA backbone by beta-delta elimination to generate a single-strand break at the site of the removed base with both 3'- and 5'-phosphates. This chain is Formamidopyrimidine-DNA glycosylase (mutM1), found in Xylella fastidiosa (strain 9a5c).